The primary structure comprises 334 residues: MNLINEKLNNLENNAAKSPKEAVILLNMGGPNSLYEVGVFLKNMFDDPFILTIKNNFMRKMVGKMIINSRIEKSKKIYEKLGGKSPLTPITFALTERLNELDPSRFYTYAMRYTPPYASMVLQDLALKEVESLVFFSMYPQYSSTTTLSSFNDAFNALKSLETFRPKVRVIERFYADKKLNEIILNTILSTLNNRKSQDFVLIFSVHGLPKSIVDAGDTYQQECEHHVSLLKELMQQKNIPFKEVLLSYQSKLGPMKWLEPSTEELIEKHRKSNIIIYPLAFTIDNSETIYELDMQYRLMAERLAIKEYLVCPCLNDSIEFAKFIIERVKNLKE.

Fe cation-binding residues include His-207 and Glu-288.

This sequence belongs to the ferrochelatase family.

It localises to the cytoplasm. It catalyses the reaction heme b + 2 H(+) = protoporphyrin IX + Fe(2+). Its pathway is porphyrin-containing compound metabolism; protoheme biosynthesis; protoheme from protoporphyrin-IX: step 1/1. Its function is as follows. Catalyzes the ferrous insertion into protoporphyrin IX. This Helicobacter pylori (strain P12) protein is Ferrochelatase.